The primary structure comprises 461 residues: Ribonuclease inhibitor (461 aa).

Serine 2 is subject to N-acetylserine. The tract at residues 2–11 (SLDIQSLDIQ) is 2 X 5 AA tandem repeats of S-L-D-I-Q. LRR repeat units lie at residues 20-48 (WAEL…CKDI), 49-76 (SSAL…VHCV), 77-105 (LQGL…CGVL), 106-133 (SSTL…LQLL), 134-162 (CEGL…CEPL), 163-190 (ASVL…VRVL), 191-219 (CQGL…CRDL), 220-247 (CGIV…MAEL), 248-276 (CPGL…CGDL), 277-304 (CRVL…ARLL), 305-333 (CETL…CSHF), 334-361 (SSVL…VREL), 362-390 (CQGL…CSSL), 391-418 (AATL…ILQL), and 419-447 (VESV…EDRL). Threonine 82 is modified (phosphothreonine). Serine 91 carries the phosphoserine modification.

As to quaternary structure, forms high-affinity heterodimers with RNASE1, ANG and RNASE2. The N-terminus is blocked. Post-translationally, at least 30 of the 32 cysteine residues are in the reduced form.

The protein resides in the cytoplasm. The protein localises to the nucleus. In terms of biological role, ribonuclease inhibitor which inhibits RNASE1, RNASE2 and angiogenin (ANG). May play a role in redox homeostasis. Required to inhibit the cytotoxic tRNA ribonuclease activity of ANG in the cytoplasm in absence of stress. Relocates to the nucleus in response to stress, relieving inhibition of ANG in the cytoplasm, and inhibiting the angiogenic activity of ANG in the nucleus. This is Ribonuclease inhibitor from Homo sapiens (Human).